The sequence spans 102 residues: Glutaredoxin 1 (102 aa).

Residues 1-96 form the Glutaredoxin domain; the sequence is MNKAILHTII…KLLENQPKTT (96 aa). A disulfide bridge connects residues Cys-17 and Cys-20.

The protein belongs to the glutaredoxin family. Monomer.

Its subcellular location is the cytoplasm. Functionally, has a glutathione-disulfide oxidoreductase activity in the presence of NADPH and glutathione reductase. Reduces low molecular weight disulfides and proteins. The polypeptide is Glutaredoxin 1 (grxC1) (Rickettsia conorii (strain ATCC VR-613 / Malish 7)).